The following is a 1134-amino-acid chain: Ankyrin repeat and SAM domain-containing protein 1A (1134 aa).

Glycine 2 is modified (N-acetylglycine). Residues 33–55 show a composition bias toward gly residues; that stretch reads GGGGGGGSGGGGGGSGGGGGGLG. The segment at 33 to 57 is disordered; that stretch reads GGGGGGGSGGGGGGSGGGGGGLGSS. ANK repeat units follow at residues 79 to 108, 112 to 141, 148 to 177, 181 to 210, 214 to 243, and 246 to 275; these read TGYT…LTNV, KGCY…SHTR, DNET…DPTM, KFET…NLLS, KKHT…DSNY, and EMGS…DVNI. The span at 305-317 shows a compositional bias: basic and acidic residues; it reads HMTGKRSTKEVDK. Disordered regions lie at residues 305-338, 375-422, and 469-498; these read HMTG…KSQG, SMAS…EEDH, and VDGK…VPEQ. Residue threonine 318 is modified to Phosphothreonine. Over residues 328-337 the composition is skewed to polar residues; that stretch reads SMDSISQKSQ. Positions 382-392 are enriched in basic and acidic residues; it reads SDQDSTNKEAE. Serine 507 carries the phosphoserine modification. The disordered stretch occupies residues 569 to 650; sequence LTGLPTTNSR…MGSRSESLSN (82 aa). Polar residues predominate over residues 572-588; that stretch reads LPTTNSRSHPETLTHTA. Residues 613–628 are compositionally biased toward basic and acidic residues; sequence PKAELKLSRSLSKSDS. Phosphoserine is present on residues serine 620, serine 622, serine 624, serine 626, serine 628, serine 647, serine 661, serine 663, serine 666, and serine 677. The segment covering 633 to 650 has biased composition (polar residues); that stretch reads CSPTEDATMGSRSESLSN. SAM domains are found at residues 696–762 and 770–837; these read TLEQ…LPKV and NSPP…YEEP. Residues 856 to 868 are compositionally biased toward polar residues; that stretch reads TSSPLSQNDSCTG. 2 disordered regions span residues 856–896 and 1079–1134; these read TSSP…APSR and AEMI…LSTN. Residue serine 887 is modified to Phosphoserine. Residues 936–1091 enclose the PID domain; that stretch reads IFESCGYEAN…IETKSSKPVP (156 aa). The segment covering 1123–1134 has biased composition (basic and acidic residues); that stretch reads PKPDSKRSLSTN.

As to quaternary structure, interacts (via SAM domain) with EPHA2 (via SAM domain). Interacts with EPHA8; EPHA8 kinase activity-independent but stimulated by EPHA8 ubiquitination. Interacts (via SAM domain) with EPHA6 (via SAM domain). Phosphorylated on tyrosine residues in response to EGF and PDGF. In terms of tissue distribution, widely expressed (at protein level).

The protein localises to the cytoplasm. It localises to the cell projection. In terms of biological role, regulator of different signaling pathways. Regulates EPHA8 receptor tyrosine kinase signaling to control cell migration and neurite retraction. The chain is Ankyrin repeat and SAM domain-containing protein 1A (ANKS1A) from Homo sapiens (Human).